A 273-amino-acid polypeptide reads, in one-letter code: Inactive endochitinase At2g43600 (273 aa).

The first 22 residues, 1 to 22, serve as a signal peptide directing secretion; sequence MTIKNVIFSLFILAILAETVFS. Positions 23–61 constitute a Chitin-binding type-1 domain; sequence QNCMDTSCPGLKECCSRWGFCGTKDEYCGFFCFSGPCNI. Intrachain disulfides connect Cys-25–Cys-37, Cys-30–Cys-43, Cys-36–Cys-50, and Cys-54–Cys-59. The catalytic stretch occupies residues 78-273; it reads GKIETVITSA…GVTPDQGLDC (196 aa). The N-linked (GlcNAc...) asparagine glycan is linked to Asn-99.

This sequence belongs to the glycosyl hydrolase 19 family. Chitinase class I subfamily.

The sequence is that of Inactive endochitinase At2g43600 from Arabidopsis thaliana (Mouse-ear cress).